We begin with the raw amino-acid sequence, 600 residues long: Zinc metalloproteinase-disintegrin-like stejnihagin-B (600 aa).

A signal peptide spans 1-20; it reads MIEVLLVTICLAVFPYQGSS. Positions 21–191 are excised as a propeptide; the sequence is IILESGNVND…KASQLVVTAE (171 aa). Glutamine 192 is modified (pyrrolidone carboxylic acid). One can recognise a Peptidase M12B domain in the interval 198–389; that stretch reads RYVKLAIVAD…YNPQCILNAL (192 aa). Residues asparagine 261 and asparagine 317 are each glycosylated (N-linked (GlcNAc...) asparagine). 3 cysteine pairs are disulfide-bonded: cysteine 306-cysteine 384, cysteine 346-cysteine 368, and cysteine 348-cysteine 351. Histidine 331 contacts Zn(2+). The active site involves glutamate 332. Residues histidine 335 and histidine 341 each contribute to the Zn(2+) site. The 87-residue stretch at 397-483 folds into the Disintegrin domain; the sequence is PPVCGNELLE…DCPTDSFHRN (87 aa). 6 residues coordinate Ca(2+): valine 399, asparagine 402, leucine 404, glutamate 406, glutamate 409, and aspartate 412. 14 disulfide bridges follow: cysteine 400–cysteine 429, cysteine 411–cysteine 424, cysteine 413–cysteine 419, cysteine 423–cysteine 446, cysteine 437–cysteine 443, cysteine 442–cysteine 468, cysteine 455–cysteine 475, cysteine 462–cysteine 494, cysteine 487–cysteine 499, cysteine 506–cysteine 556, cysteine 521–cysteine 565, cysteine 534–cysteine 544, cysteine 551–cysteine 587, and cysteine 581–cysteine 593. A glycan (N-linked (GlcNAc...) asparagine) is linked at asparagine 425. Residues 461-463 carry the D/ECD-tripeptide motif; sequence ECD. Asparagine 467 carries an N-linked (GlcNAc...) asparagine glycan. N-linked (GlcNAc...) asparagine glycosylation occurs at asparagine 513.

The protein belongs to the venom metalloproteinase (M12B) family. P-III subfamily. P-IIIa sub-subfamily. In terms of assembly, monomer. Zn(2+) is required as a cofactor. As to expression, expressed by the venom gland.

The protein localises to the secreted. Its function is as follows. This metalloproteinase-disintegrin-like impairs hemostasis in the envenomed animal. The protein is Zinc metalloproteinase-disintegrin-like stejnihagin-B of Trimeresurus stejnegeri (Chinese green tree viper).